The chain runs to 622 residues: DNA topoisomerase 3 (622 aa).

Positions arginine 2–asparagine 148 constitute a Toprim domain. Positions serine 166–phenylalanine 596 constitute a Topo IA-type catalytic domain. Catalysis depends on tyrosine 330, which acts as the O-(5'-phospho-DNA)-tyrosine intermediate.

The protein belongs to the type IA topoisomerase family. Interacts with hus2.

It catalyses the reaction ATP-independent breakage of single-stranded DNA, followed by passage and rejoining.. Releases the supercoiling and torsional tension of DNA introduced during the DNA replication and transcription by transiently cleaving and rejoining one strand of the DNA duplex. Introduces a single-strand break via transesterification at a target site in duplex DNA. The scissile phosphodiester is attacked by the catalytic tyrosine of the enzyme, resulting in the formation of a DNA-(5'-phosphotyrosyl)-enzyme intermediate and the expulsion of a 3'-OH DNA strand. The free DNA strand than undergoes passage around the unbroken strand thus removing DNA supercoils. Finally, in the religation step, the DNA 3'-OH attacks the covalent intermediate to expel the active-site tyrosine and restore the DNA phosphodiester backbone. This chain is DNA topoisomerase 3 (top3), found in Schizosaccharomyces pombe (strain 972 / ATCC 24843) (Fission yeast).